Consider the following 108-residue polypeptide: MNKIIELTDQNFEKEVLEHKSFVLVDFWAEWCNPCKILAPILEEIAQEYFNKIKVGKLNIEKNPNTAPIYSIRGIPALLLFHGREVLATKVGAISKLQLKDFLDENIK.

The Thioredoxin domain maps to 2 to 108 (NKIIELTDQN…LKDFLDENIK (107 aa)). Cysteines 32 and 35 form a disulfide.

The protein belongs to the thioredoxin family.

Its function is as follows. Participates in various redox reactions through the reversible oxidation of its active center dithiol to a disulfide and catalyzes dithiol-disulfide exchange reactions. The protein is Thioredoxin (trxA) of Buchnera aphidicola subsp. Schizaphis graminum (strain Sg).